Here is a 429-residue protein sequence, read N- to C-terminus: MQSYTVRPAKGIRGEITVPGDKSISHRSIMLGSIARGETTVRGFLRGEDNIATLNAFRAMGVVIDDDGETLRIAGKGLRGLAEPTDVLDCGNSGTSMRLLTGLLAPQRFYSVLSGDQYLRRRPMRRVVEPLSRMGACIHGREGGEKAPLAIVGRDLKGISYTSSVASAQVKSALMLAGLYAEGETRVTEPHLSRDHSERMFRHFGADIENGPAGVVVRGGRELEGRDIIVPGDISSAAFFMVAALIVPGSELLIRGVGVNPTRTGIIDILTAMGGSLELLDQREVSGEPVADILVRSSRLKGIEIAGEVVPRAIDEFPVICVAAAVAEGRTVVREARELRVKETDRIAAMATNLRAVGVTVTESEDGMDIEGAEQIAAGTVESFGDHRIAMSMLIAGLTAGGDITVTDTECIGTSFPTFFPLLEKVAAR.

3 residues coordinate 3-phosphoshikimate: Lys-22, Ser-23, and Arg-27. Phosphoenolpyruvate is bound at residue Lys-22. Residues Gly-94 and Arg-122 each contribute to the phosphoenolpyruvate site. 4 residues coordinate 3-phosphoshikimate: Ser-167, Gln-169, Asp-315, and Lys-342. Gln-169 is a phosphoenolpyruvate binding site. The active-site Proton acceptor is the Asp-315. The phosphoenolpyruvate site is built by Arg-346 and Arg-388.

Belongs to the EPSP synthase family. In terms of assembly, monomer.

It is found in the cytoplasm. The enzyme catalyses 3-phosphoshikimate + phosphoenolpyruvate = 5-O-(1-carboxyvinyl)-3-phosphoshikimate + phosphate. Its pathway is metabolic intermediate biosynthesis; chorismate biosynthesis; chorismate from D-erythrose 4-phosphate and phosphoenolpyruvate: step 6/7. Catalyzes the transfer of the enolpyruvyl moiety of phosphoenolpyruvate (PEP) to the 5-hydroxyl of shikimate-3-phosphate (S3P) to produce enolpyruvyl shikimate-3-phosphate and inorganic phosphate. The sequence is that of 3-phosphoshikimate 1-carboxyvinyltransferase from Geobacter metallireducens (strain ATCC 53774 / DSM 7210 / GS-15).